The chain runs to 632 residues: 1-deoxy-D-xylulose-5-phosphate synthase (632 aa).

Residues histidine 79 and 120 to 122 (GHA) each bind thiamine diphosphate. Aspartate 151 contributes to the Mg(2+) binding site. Residues 152–153 (GS), asparagine 180, phenylalanine 292, and glutamate 376 each bind thiamine diphosphate. Asparagine 180 provides a ligand contact to Mg(2+).

This sequence belongs to the transketolase family. DXPS subfamily. As to quaternary structure, homodimer. It depends on Mg(2+) as a cofactor. Requires thiamine diphosphate as cofactor.

The catalysed reaction is D-glyceraldehyde 3-phosphate + pyruvate + H(+) = 1-deoxy-D-xylulose 5-phosphate + CO2. Its pathway is metabolic intermediate biosynthesis; 1-deoxy-D-xylulose 5-phosphate biosynthesis; 1-deoxy-D-xylulose 5-phosphate from D-glyceraldehyde 3-phosphate and pyruvate: step 1/1. Its function is as follows. Catalyzes the acyloin condensation reaction between C atoms 2 and 3 of pyruvate and glyceraldehyde 3-phosphate to yield 1-deoxy-D-xylulose-5-phosphate (DXP). The sequence is that of 1-deoxy-D-xylulose-5-phosphate synthase from Azobacteroides pseudotrichonymphae genomovar. CFP2.